The primary structure comprises 543 residues: uncharacterized protein (543 aa).

Residues Asn-203–Glu-460 form the Radical SAM core domain. Residues Val-470 to Arg-534 enclose the TRAM domain.

This is an uncharacterized protein from Methanocaldococcus jannaschii (strain ATCC 43067 / DSM 2661 / JAL-1 / JCM 10045 / NBRC 100440) (Methanococcus jannaschii).